The primary structure comprises 313 residues: N(5)-(carboxyethyl)ornithine synthase (313 aa).

Pyruvate-binding residues include Arg15, Lys71, and His92. NADP(+) is bound at residue 171-176 (GSGNVA).

The protein belongs to the AlaDH/PNT family. CEOS subfamily. As to quaternary structure, homotetramer.

It carries out the reaction N(5)-[1(S)-1-carboxyethyl]-L-ornithine + NADP(+) + H2O = L-ornithine + pyruvate + NADPH + H(+). With respect to regulation, is potently inhibited by the reaction product N(5)-(L-1-carboxyethyl)-L-ornithine. Catalyzes the NADPH-dependent reductive condensation between pyruvic acid and the side chain amino group of L-ornithine to form N(5)-(L-1-carboxyethyl)-L-ornithine. To a lesser extent, can also use L-lysine as substrate (yielding N(6)-(L-1-carboxyethyl)-L-lysine). NADH cannot replace NADPH in the condensation reaction. This Lactococcus lactis subsp. lactis (Streptococcus lactis) protein is N(5)-(carboxyethyl)ornithine synthase (ceo).